Here is a 417-residue protein sequence, read N- to C-terminus: Serine--tRNA ligase (417 aa).

232 to 234 (TSE) is a binding site for L-serine. 263–265 (RKE) contacts ATP. An L-serine-binding site is contributed by Glu-286. An ATP-binding site is contributed by 350–353 (EISS). Ser-385 is a binding site for L-serine.

This sequence belongs to the class-II aminoacyl-tRNA synthetase family. Type-1 seryl-tRNA synthetase subfamily. In terms of assembly, homodimer. The tRNA molecule binds across the dimer.

The protein resides in the cytoplasm. It carries out the reaction tRNA(Ser) + L-serine + ATP = L-seryl-tRNA(Ser) + AMP + diphosphate + H(+). The enzyme catalyses tRNA(Sec) + L-serine + ATP = L-seryl-tRNA(Sec) + AMP + diphosphate + H(+). It functions in the pathway aminoacyl-tRNA biosynthesis; selenocysteinyl-tRNA(Sec) biosynthesis; L-seryl-tRNA(Sec) from L-serine and tRNA(Sec): step 1/1. Functionally, catalyzes the attachment of serine to tRNA(Ser). Is also able to aminoacylate tRNA(Sec) with serine, to form the misacylated tRNA L-seryl-tRNA(Sec), which will be further converted into selenocysteinyl-tRNA(Sec). In Campylobacter hominis (strain ATCC BAA-381 / DSM 21671 / CCUG 45161 / LMG 19568 / NCTC 13146 / CH001A), this protein is Serine--tRNA ligase.